A 420-amino-acid chain; its full sequence is MVLSRGETKKNSVRLTAKQEKKPQSTFQTLKQSLKLSNNKKLKQDSTQHSNDTNKSVKAKKNGTSSKKTGTQRKRISTQRFSLFTYGNVQVMNSFVPIHNDIPNSSCIRRNSQVSANNVTESSGVFFNDTQSQDSQNTIKLKPTSLMAKGPIEIYQICTGFDKLKENIAPFQKSSKASSHDGHVVNYLSIGRHGDIVHPVLPKLQITRLNGAGFKYFISFYNPERYWEIEFLPLISQSQSELENSVKAFENVISKICQFSHINEGATIGNNESLSDKFKLPPTSDIEPPNTEIINNDDDNDDDDDNYDDDDLNYLLDEEYEQGCTDNSFSVISNTCSNLNASFLYPSDPTDAVSISINEAFKNAIRRTAPVLNIPIAAPSIHSKQQNKRYSSYPFIDSPPYLQDRHRRFQRRSISGLGDL.

Residues 1–10 (MVLSRGETKK) show a composition bias toward basic and acidic residues. Disordered regions lie at residues 1 to 75 (MVLS…QRKR) and 273 to 309 (SLSD…NYDD). The segment covering 30–39 (LKQSLKLSNN) has biased composition (low complexity). The span at 45–56 (DSTQHSNDTNKS) shows a compositional bias: polar residues. Position 273 is a phosphoserine (Ser-273). Residues 295 to 309 (NNDDDNDDDDDNYDD) are compositionally biased toward acidic residues.

Belongs to the INP1 family. Interacts with PEX25, PEX30 and VPS1.

The protein localises to the peroxisome membrane. Functionally, required for peroxisome inheritance. The polypeptide is Inheritance of peroxisomes protein 1 (INP1) (Saccharomyces cerevisiae (strain ATCC 204508 / S288c) (Baker's yeast)).